The chain runs to 181 residues: ADP-ribosylation factor 1-like 2 (181 aa).

Gly-2 is lipidated: N-myristoyl glycine. The tract at residues 3 to 16 (NVFGSLFKGLFGKR) is important for the stable binding to the membranes. GTP contacts are provided by residues 24 to 32 (GLDAAGKTT), 126 to 129 (NKQD), and Ala-160.

The protein belongs to the small GTPase superfamily. Arf family. In terms of tissue distribution, expressed in hypodermis, intestine, spermatheca, uterus, gonadal sheath, vulva cells, pharynx muscle, body wall muscle, head neurons, ventral nerve cord.

It localises to the golgi apparatus membrane. The enzyme catalyses GTP + H2O = GDP + phosphate + H(+). Alternates between an inactive GDP-bound form and an active GTP-bound form. Activated by a guanine nucleotide-exchange factor (GEF) and inactivated by GTPase-activating protein (GAP). Small GTPase involved in protein trafficking between different compartments. Modulates vesicle budding and uncoating within the Golgi complex. In its GTP-bound form, triggers the recruitment of coatomer proteins to the Golgi membrane. The hydrolysis of ARF1-bound GTP, which is mediated by ARFGAPs proteins, is required for dissociation of coat proteins from Golgi membranes and vesicles. Involved in endoplasmic reticulum dynamics during embryogenesis. Also required for adult germline function. Plays a role in cell shedding during embryogenesis probably by promoting the endocytosis of cell adhesion molecules. During neurogenesis, involved in cell autonomous Q.p neuroblast asymmetric divisions that generate one precursor cell and one apoptotic cell, probably by controlling endocytosis. Plays a role in maintaining mitochondrial morphology. This is ADP-ribosylation factor 1-like 2 from Caenorhabditis elegans.